The primary structure comprises 193 residues: Segregation and condensation protein B (193 aa).

It belongs to the ScpB family. As to quaternary structure, homodimer. Homodimerization may be required to stabilize the binding of ScpA to the Smc head domains. Component of a cohesin-like complex composed of ScpA, ScpB and the Smc homodimer, in which ScpA and ScpB bind to the head domain of Smc. The presence of the three proteins is required for the association of the complex with DNA.

The protein localises to the cytoplasm. Participates in chromosomal partition during cell division. May act via the formation of a condensin-like complex containing Smc and ScpA that pull DNA away from mid-cell into both cell halves. The protein is Segregation and condensation protein B of Streptococcus thermophilus (strain CNRZ 1066).